We begin with the raw amino-acid sequence, 374 residues long: Probable dual-specificity RNA methyltransferase RlmN 3 (374 aa).

Residue Glu-96 is the Proton acceptor of the active site. Residues 110 to 350 (DHSRKTICIS…VTLRREKGHD (241 aa)) form the Radical SAM core domain. Residues Cys-117 and Cys-355 are joined by a disulfide bond. [4Fe-4S] cluster-binding residues include Cys-124, Cys-128, and Cys-131. Residues 181-182 (GE), Ser-213, 236-238 (SLH), and Asn-312 each bind S-adenosyl-L-methionine. The S-methylcysteine intermediate role is filled by Cys-355.

It belongs to the radical SAM superfamily. RlmN family. The cofactor is [4Fe-4S] cluster.

Its subcellular location is the cytoplasm. The catalysed reaction is adenosine(2503) in 23S rRNA + 2 reduced [2Fe-2S]-[ferredoxin] + 2 S-adenosyl-L-methionine = 2-methyladenosine(2503) in 23S rRNA + 5'-deoxyadenosine + L-methionine + 2 oxidized [2Fe-2S]-[ferredoxin] + S-adenosyl-L-homocysteine. The enzyme catalyses adenosine(37) in tRNA + 2 reduced [2Fe-2S]-[ferredoxin] + 2 S-adenosyl-L-methionine = 2-methyladenosine(37) in tRNA + 5'-deoxyadenosine + L-methionine + 2 oxidized [2Fe-2S]-[ferredoxin] + S-adenosyl-L-homocysteine. Its function is as follows. Specifically methylates position 2 of adenine 2503 in 23S rRNA and position 2 of adenine 37 in tRNAs. This chain is Probable dual-specificity RNA methyltransferase RlmN 3, found in Opitutus terrae (strain DSM 11246 / JCM 15787 / PB90-1).